The primary structure comprises 266 residues: Decarboxylase tropJ (266 aa).

Residue Glu80 is the Proton acceptor of the active site. Zn(2+) is bound by residues Glu80, His99, His101, and His180.

Belongs to the aldolase class II family. It depends on Zn(2+) as a cofactor.

The protein operates within secondary metabolite biosynthesis. Functionally, decarboxylase; part of the gene cluster that mediates the biosynthesis of the tropolone class of fungal maleic anhydrides. The pathway begins with the synthesis of 3-methylorcinaldehyde by the non-reducing polyketide synthase (PKS) tropA. 3-methylorcinaldehyde is the substrate for the FAD-dependent monooxygenase tropB to yield a dearomatized hydroxycyclohexadione. The 2-oxoglutarate-dependent dioxygenase tropC then performs the oxidative ring expansion to provide the first tropolone metabolite stipitaldehyde. Trop D converts stipitaldehyde into stipitacetal which is in turn converted to stipitalide by the short-chain dehydrogenase/reductase tropE. The next steps involve tropF, tropG, tropH, tropI and tropJ to form successive tropolone maleic anhydrides including stipitaldehydic, stipitatonic and stipitatic acids. The polypeptide is Decarboxylase tropJ (Talaromyces stipitatus (strain ATCC 10500 / CBS 375.48 / QM 6759 / NRRL 1006) (Penicillium stipitatum)).